We begin with the raw amino-acid sequence, 472 residues long: Dihydrolipoyl dehydrogenase 2 (472 aa).

Residues 39–47 (ERDAYGGTC), K56, and A118 each bind FAD. The cysteines at positions 47 and 52 are disulfide-linked. NAD(+) is bound by residues 186 to 190 (GAGYI), E209, and 275 to 278 (AVGR). FAD is bound by residues D318 and A326. H450 (proton acceptor) is an active-site residue.

Belongs to the class-I pyridine nucleotide-disulfide oxidoreductase family. In terms of assembly, homodimer. It depends on FAD as a cofactor.

It is found in the cytoplasm. The catalysed reaction is N(6)-[(R)-dihydrolipoyl]-L-lysyl-[protein] + NAD(+) = N(6)-[(R)-lipoyl]-L-lysyl-[protein] + NADH + H(+). This chain is Dihydrolipoyl dehydrogenase 2 (lpdA2), found in Haloarcula marismortui (strain ATCC 43049 / DSM 3752 / JCM 8966 / VKM B-1809) (Halobacterium marismortui).